The following is a 703-amino-acid chain: UvrABC system protein B (703 aa).

A Helicase ATP-binding domain is found at 33–419 (ERIENGENDV…SDGVVEQIIR (387 aa)). Position 46–53 (46–53 (GATGTGKT)) interacts with ATP. A Beta-hairpin motif is present at residues 99–122 (YYDYYQPEAYIPQTDTYIEKDSNI). Residues 436-589 (QIDDLLAEIK…QIAYNQEHGI (154 aa)) form the Helicase C-terminal domain. Positions 659 to 694 (ADLIRQLSEQMHTAAEQLQFELAARLRDEIRDLKKE) constitute a UVR domain.

This sequence belongs to the UvrB family. Forms a heterotetramer with UvrA during the search for lesions. Interacts with UvrC in an incision complex.

It is found in the cytoplasm. In terms of biological role, the UvrABC repair system catalyzes the recognition and processing of DNA lesions. A damage recognition complex composed of 2 UvrA and 2 UvrB subunits scans DNA for abnormalities. Upon binding of the UvrA(2)B(2) complex to a putative damaged site, the DNA wraps around one UvrB monomer. DNA wrap is dependent on ATP binding by UvrB and probably causes local melting of the DNA helix, facilitating insertion of UvrB beta-hairpin between the DNA strands. Then UvrB probes one DNA strand for the presence of a lesion. If a lesion is found the UvrA subunits dissociate and the UvrB-DNA preincision complex is formed. This complex is subsequently bound by UvrC and the second UvrB is released. If no lesion is found, the DNA wraps around the other UvrB subunit that will check the other stand for damage. This chain is UvrABC system protein B, found in Bifidobacterium longum (strain NCC 2705).